The following is a 179-amino-acid chain: MEQFHATTIVCVRRGNHVALGGDGQVTLGNIVIKGTVRKIRRLYHDKVLAGFAGATADAFTLQERFEAKLEKHQGHLMRAAVELTRDWRTDRVLRRLEAMLIVADTEHTLVLTGNGDVLEPEHGLAAIGSGGAYAQSAALALLRNTELPPEAIVKQSLEIAGDLCIYTNQNHVIETLGA.

Residue T7 is part of the active site. 3 residues coordinate Na(+): G162, C165, and T168.

This sequence belongs to the peptidase T1B family. HslV subfamily. A double ring-shaped homohexamer of HslV is capped on each side by a ring-shaped HslU homohexamer. The assembly of the HslU/HslV complex is dependent on binding of ATP.

It localises to the cytoplasm. The catalysed reaction is ATP-dependent cleavage of peptide bonds with broad specificity.. With respect to regulation, allosterically activated by HslU binding. Functionally, protease subunit of a proteasome-like degradation complex believed to be a general protein degrading machinery. This chain is ATP-dependent protease subunit HslV, found in Bordetella pertussis (strain Tohama I / ATCC BAA-589 / NCTC 13251).